The following is a 268-amino-acid chain: Virulence plasmid ParA family protein pGP5-D (268 aa).

Residue 13–20 (FKGGTGKT) participates in ATP binding.

The protein belongs to the ParA family.

The sequence is that of Virulence plasmid ParA family protein pGP5-D from Chlamydia muridarum (strain MoPn / Nigg).